We begin with the raw amino-acid sequence, 877 residues long: (E,E)-geranyllinalool synthase (877 aa).

Mg(2+)-binding residues include Asp540 and Asp544. Asp540, Asp544, Arg677, and Asn680 together coordinate substrate. Positions 540–544 match the DDXXD motif motif; the sequence is DDFFD. Mg(2+)-binding residues include Asn680, Ser684, and Glu688.

Belongs to the terpene synthase family. Tpsf subfamily. Mg(2+) serves as cofactor. Requires Mn(2+) as cofactor. Expressed in leaves and flowers.

It localises to the cytoplasm. It carries out the reaction (2E,6E,10E)-geranylgeranyl diphosphate + H2O = (6E,10E)-geranyllinalool + diphosphate. Its pathway is secondary metabolite biosynthesis; terpenoid biosynthesis. Involved in the biosynthesis of homoterpenes, attractants of herbivores parasitoids and predators (e.g. predatory mites and parasitoid wasps). Involved in diterpene (C20) biosynthesis. Catalyzes the conversion of geranylgeranyl diphosphate to (E,E)-geranyllinalool, the precursor of the insect-induced volatile C16-homoterpene TMTT. This is (E,E)-geranyllinalool synthase from Arabidopsis thaliana (Mouse-ear cress).